A 282-amino-acid polypeptide reads, in one-letter code: Nucleotide-binding protein XAC2976 (282 aa).

5 to 12 (GLSGSGKS) contacts ATP. GTP is bound at residue 57–60 (DVRS).

The protein belongs to the RapZ-like family.

Functionally, displays ATPase and GTPase activities. The polypeptide is Nucleotide-binding protein XAC2976 (Xanthomonas axonopodis pv. citri (strain 306)).